Reading from the N-terminus, the 71-residue chain is V-type proton ATPase subunit e (71 aa).

Residues 1–2 (MS) lie on the Lumenal side of the membrane. Residues 3–23 (FFHVVFVAFVIAAIGAAGWFV) traverse the membrane as a helical segment. The Cytoplasmic segment spans residues 24-35 (TPKGKNQTLLRT). Residues 36 to 56 (SLLLTLTCCYLMWAITYLCQL) form a helical membrane-spanning segment. Over 57–71 (HPLITPRRSDLRMEY) the chain is Lumenal.

It belongs to the V-ATPase e1/e2 subunit family. V-ATPase is a heteromultimeric enzyme composed of a peripheral catalytic V1 complex (components A to H) attached to an integral membrane V0 proton pore complex (components: a, c, c', c'', d, e, f and VOA1).

It localises to the vacuole membrane. Its function is as follows. Subunit of the V0 complex of vacuolar(H+)-ATPase (V-ATPase), a multisubunit enzyme composed of a peripheral complex (V1) that hydrolyzes ATP and a membrane integral complex (V0) that translocates protons. V-ATPase is responsible for acidifying and maintaining the pH of intracellular compartments. The polypeptide is V-type proton ATPase subunit e (VMA9) (Cryptococcus neoformans var. neoformans serotype D (strain JEC21 / ATCC MYA-565) (Filobasidiella neoformans)).